The following is a 205-amino-acid chain: Dephospho-CoA kinase (205 aa).

The DPCK domain occupies 4–204 (VVGLTGGIAS…QYYLTLATQQ (201 aa)). 12-17 (ASGKTT) provides a ligand contact to ATP.

Belongs to the CoaE family.

Its subcellular location is the cytoplasm. The catalysed reaction is 3'-dephospho-CoA + ATP = ADP + CoA + H(+). It functions in the pathway cofactor biosynthesis; coenzyme A biosynthesis; CoA from (R)-pantothenate: step 5/5. Functionally, catalyzes the phosphorylation of the 3'-hydroxyl group of dephosphocoenzyme A to form coenzyme A. The polypeptide is Dephospho-CoA kinase (Haemophilus ducreyi (strain 35000HP / ATCC 700724)).